Consider the following 441-residue polypeptide: Trigger factor (441 aa).

One can recognise a PPIase FKBP-type domain in the interval 175–257 (GDFISLSLHV…VNAVIEVVAP (83 aa)).

The protein belongs to the FKBP-type PPIase family. Tig subfamily.

It localises to the cytoplasm. The enzyme catalyses [protein]-peptidylproline (omega=180) = [protein]-peptidylproline (omega=0). Its function is as follows. Involved in protein export. Acts as a chaperone by maintaining the newly synthesized protein in an open conformation. Functions as a peptidyl-prolyl cis-trans isomerase. In Chlamydia abortus (strain DSM 27085 / S26/3) (Chlamydophila abortus), this protein is Trigger factor.